The sequence spans 447 residues: Innexin-5 (447 aa).

4 consecutive transmembrane segments (helical) span residues 30 to 47 (TSTL…SQYV), 108 to 128 (QWIP…SIIW), 198 to 218 (ALYL…FWIL), and 283 to 303 (VYVF…CSLA). The tract at residues 389–447 (KKDDDSALPASAPVDLQEDDDDDTPFPPPTKAVAETLTSDDEEEETDVDSPDTTATLPR) is disordered. The segment covering 426-438 (TSDDEEEETDVDS) has biased composition (acidic residues).

It belongs to the pannexin family.

Its subcellular location is the cell membrane. The protein resides in the cell junction. It is found in the gap junction. Functionally, structural component of the gap junctions. In Caenorhabditis elegans, this protein is Innexin-5 (inx-5).